Consider the following 58-residue polypeptide: Photosystem II reaction center protein K (58 aa).

The propeptide occupies 1-21; sequence MLVISNVYPSNLFTLINPFFA. A helical transmembrane segment spans residues 29–49; that stretch reads IFDPIVDVMPIIPVFFFLLAF.

Belongs to the PsbK family. PSII is composed of 1 copy each of membrane proteins PsbA, PsbB, PsbC, PsbD, PsbE, PsbF, PsbH, PsbI, PsbJ, PsbK, PsbL, PsbM, PsbT, PsbX, PsbY, PsbZ, Psb30/Ycf12, at least 3 peripheral proteins of the oxygen-evolving complex and a large number of cofactors. It forms dimeric complexes.

The protein localises to the plastid. It is found in the chloroplast thylakoid membrane. Its function is as follows. One of the components of the core complex of photosystem II (PSII). PSII is a light-driven water:plastoquinone oxidoreductase that uses light energy to abstract electrons from H(2)O, generating O(2) and a proton gradient subsequently used for ATP formation. It consists of a core antenna complex that captures photons, and an electron transfer chain that converts photonic excitation into a charge separation. This Psilotum nudum (Whisk fern) protein is Photosystem II reaction center protein K.